We begin with the raw amino-acid sequence, 223 residues long: Noggin-3 (223 aa).

Positions 1-23 (MDNIPYFLATVLIFSLGFRIEEG) are cleaved as a signal peptide. N-linked (GlcNAc...) asparagine glycans are attached at residues N60 and N93.

This sequence belongs to the noggin family. In terms of assembly, homodimer; disulfide-linked.

It localises to the secreted. In terms of biological role, may function as an inhibitor of bone morphogenetic proteins (BMP) signaling during later stages of development including late phases of dorsoventral patterning, to refine the early pattern set up by the interaction of chordino and BMP2/4. Not involved in organizer function or early phases of dorsoventral pattern formation. This chain is Noggin-3 (nog3), found in Danio rerio (Zebrafish).